A 669-amino-acid polypeptide reads, in one-letter code: Trifunctional UDP-glucose 4,6-dehydratase/UDP-4-keto-6-deoxy-D-glucose 3,5-epimerase/UDP-4-keto-L-rhamnose-reductase RHM1 (669 aa).

NAD(+) is bound at residue 13–19 (GAAGFIA). A substrate-binding site is contributed by Thr-132. Asp-133 (proton donor) is an active-site residue. Active-site proton acceptor residues include Glu-134 and Tyr-159. 391–397 (GKTGWIG) provides a ligand contact to NADP(+).

In the N-terminal section; belongs to the NAD(P)-dependent epimerase/dehydratase family. dTDP-glucose dehydratase subfamily. The protein in the C-terminal section; belongs to the dTDP-4-dehydrorhamnose reductase family. NAD(+) serves as cofactor. The cofactor is NADP(+). In terms of tissue distribution, expressed in roots, stems, leaves, seedlings, inflorescence tips, and siliques. Detected in the adaxial side of cotyledons, in the emerging leaves and in trichomes. Also detected in the root tip, more precisely in the epidermal cells in the meristematic and elongation zone.

The protein resides in the cytoplasm. It localises to the cytosol. It carries out the reaction UDP-alpha-D-glucose = UDP-4-dehydro-6-deoxy-alpha-D-glucose + H2O. The protein operates within carbohydrate biosynthesis. Its function is as follows. Trifunctional enzyme involved in UDP-beta-L-rhamnose biosynthesis, a precursor of the primary cell wall components rhamnogalacturonan I (RG-I) and rhamnogalacturonan II (RG-II). Plays a major role in supplying UDP-rhamnose for flavonol biosynthesis. Catalyzes the dehydration of UDP-glucose to form UDP-4-dehydro-6-deoxy-D-glucose followed by the epimerization of the C3' and C5' positions of UDP-4-dehydro-6-deoxy-D-glucose to form UDP-4-keto-beta-L-rhamnose and the reduction of UDP-4-keto-beta-L-rhamnose to yield UDP-beta-L-rhamnose. The protein is Trifunctional UDP-glucose 4,6-dehydratase/UDP-4-keto-6-deoxy-D-glucose 3,5-epimerase/UDP-4-keto-L-rhamnose-reductase RHM1 of Arabidopsis thaliana (Mouse-ear cress).